Here is a 54-residue protein sequence, read N- to C-terminus: Ovomucoid (54 aa).

Positions 4 to 54 (VDCSDYPKPACTLEYMPLCGSDNKTYGNRCNFCNAVVDSNGTLTLSHFGKC) constitute a Kazal-like domain. Cystine bridges form between Cys-6/Cys-36, Cys-14/Cys-33, and Cys-22/Cys-54. Asn-43 carries an N-linked (GlcNAc...) asparagine glycan.

The protein resides in the secreted. The polypeptide is Ovomucoid (Dendrocygna viduata (White-faced whistling-duck)).